Reading from the N-terminus, the 378-residue chain is Decaprenyl-diphosphate synthase subunit 1 (378 aa).

Isopentenyl diphosphate-binding residues include Lys72, Arg75, and His130. The Mg(2+) site is built by Asp137 and Asp141. Residue Arg147 participates in isopentenyl diphosphate binding.

Belongs to the FPP/GGPP synthase family. In terms of assembly, heterotetramer of 2 dps1 and 2 dlp1 subunits. The cofactor is Mg(2+).

It localises to the mitochondrion. The enzyme catalyses 7 isopentenyl diphosphate + (2E,6E)-farnesyl diphosphate = all-trans-decaprenyl diphosphate + 7 diphosphate. The protein operates within cofactor biosynthesis; ubiquinone biosynthesis. Supplies decaprenyl diphosphate, the precursor for the side chain of the isoprenoid quinones ubiquinone-10. The polypeptide is Decaprenyl-diphosphate synthase subunit 1 (dps1) (Schizosaccharomyces pombe (strain 972 / ATCC 24843) (Fission yeast)).